The sequence spans 151 residues: UPF0208 membrane protein ESA_00924 (151 aa).

The next 2 membrane-spanning stretches (helical) occupy residues 46–65 and 69–91; these read FAIRIMPPVAVFTLCWQIAL and LGPAVATALFALSMPMQGLWWLG.

Belongs to the UPF0208 family.

Its subcellular location is the cell inner membrane. This is UPF0208 membrane protein ESA_00924 from Cronobacter sakazakii (strain ATCC BAA-894) (Enterobacter sakazakii).